Here is a 224-residue protein sequence, read N- to C-terminus: MGAISTATLSGVLLLDKGSGMTSNSALQRARKLLDMRKAGHTGSLDPLASGILPLCFNEATKLSSYLLDSDKRYRVLARLGVTTDTGDADGEVRLRTPVPALDEPALLTVLAGFTGPILQVPPMFSALKHRGKRLYELARKGVEVERPPRPVTVFEIELAGRGADYLELDVHCSKGTYQAVEKVSIEAAMYPFAWVRGRRKPFFSAPTAAWAPPLGAARPFWAH.

Residue aspartate 46 is the Nucleophile of the active site.

Belongs to the pseudouridine synthase TruB family. Type 1 subfamily.

The enzyme catalyses uridine(55) in tRNA = pseudouridine(55) in tRNA. In terms of biological role, responsible for synthesis of pseudouridine from uracil-55 in the psi GC loop of transfer RNAs. This chain is tRNA pseudouridine synthase B, found in Methylococcus capsulatus (strain ATCC 33009 / NCIMB 11132 / Bath).